A 1098-amino-acid polypeptide reads, in one-letter code: Ran-binding protein 16 (1098 aa).

This sequence belongs to the exportin family. As to quaternary structure, binds to nucleoporins and the GTP-bound form of Ran.

It localises to the cytoplasm. The protein resides in the nucleus. In terms of biological role, may function as a nuclear transport receptor. In Drosophila melanogaster (Fruit fly), this protein is Ran-binding protein 16 (Ranbp16).